The following is a 476-amino-acid chain: Glutamate--tRNA ligase (476 aa).

A 'HIGH' region motif is present at residues 9–19 (PSPTGTLHLGT). The 'KMSKS' region motif lies at 248 to 252 (KLSKR). Residue Lys251 participates in ATP binding.

It belongs to the class-I aminoacyl-tRNA synthetase family. Glutamate--tRNA ligase type 1 subfamily. In terms of assembly, monomer.

Its subcellular location is the cytoplasm. The enzyme catalyses tRNA(Glu) + L-glutamate + ATP = L-glutamyl-tRNA(Glu) + AMP + diphosphate. In terms of biological role, catalyzes the attachment of glutamate to tRNA(Glu) in a two-step reaction: glutamate is first activated by ATP to form Glu-AMP and then transferred to the acceptor end of tRNA(Glu). The polypeptide is Glutamate--tRNA ligase (Prochlorococcus marinus (strain NATL1A)).